The primary structure comprises 406 residues: Tryptophan 2,3-dioxygenase A (406 aa).

Substrate-binding positions include 71 to 75 and arginine 143; that span reads FIVTH. Histidine 327 serves as a coordination point for heme. Threonine 341 contacts substrate.

Belongs to the tryptophan 2,3-dioxygenase family. Homotetramer. Dimer of dimers. The cofactor is heme.

It catalyses the reaction L-tryptophan + O2 = N-formyl-L-kynurenine. It functions in the pathway amino-acid degradation; L-tryptophan degradation via kynurenine pathway; L-kynurenine from L-tryptophan: step 1/2. Heme-dependent dioxygenase that catalyzes the oxidative cleavage of the L-tryptophan (L-Trp) pyrrole ring and converts L-tryptophan to N-formyl-L-kynurenine. Catalyzes the oxidative cleavage of the indole moiety. The sequence is that of Tryptophan 2,3-dioxygenase A from Danio rerio (Zebrafish).